A 480-amino-acid chain; its full sequence is Proline--tRNA ligase (480 aa).

This sequence belongs to the class-II aminoacyl-tRNA synthetase family. ProS type 3 subfamily. As to quaternary structure, homodimer.

It localises to the cytoplasm. The catalysed reaction is tRNA(Pro) + L-proline + ATP = L-prolyl-tRNA(Pro) + AMP + diphosphate. Functionally, catalyzes the attachment of proline to tRNA(Pro) in a two-step reaction: proline is first activated by ATP to form Pro-AMP and then transferred to the acceptor end of tRNA(Pro). This chain is Proline--tRNA ligase, found in Alkaliphilus oremlandii (strain OhILAs) (Clostridium oremlandii (strain OhILAs)).